A 115-amino-acid chain; its full sequence is Large ribosomal subunit protein bL19 (115 aa).

This sequence belongs to the bacterial ribosomal protein bL19 family.

Its function is as follows. This protein is located at the 30S-50S ribosomal subunit interface and may play a role in the structure and function of the aminoacyl-tRNA binding site. The polypeptide is Large ribosomal subunit protein bL19 (Nitratidesulfovibrio vulgaris (strain ATCC 29579 / DSM 644 / CCUG 34227 / NCIMB 8303 / VKM B-1760 / Hildenborough) (Desulfovibrio vulgaris)).